A 315-amino-acid polypeptide reads, in one-letter code: Putative quercetin 2,3-dioxygenase PA1205 (315 aa).

His-77, His-79, His-121, and Glu-123 together coordinate a divalent metal cation.

Belongs to the pirin family. The cofactor is a divalent metal cation.

The catalysed reaction is quercetin + O2 = 2-(3,4-dihydroxybenzoyloxy)-4,6-dihydroxybenzoate + CO. It functions in the pathway flavonoid metabolism; quercetin degradation. Putative quercetin 2,3-dioxygenase. The chain is Putative quercetin 2,3-dioxygenase PA1205 from Pseudomonas aeruginosa (strain ATCC 15692 / DSM 22644 / CIP 104116 / JCM 14847 / LMG 12228 / 1C / PRS 101 / PAO1).